Here is a 700-residue protein sequence, read N- to C-terminus: Elongation factor G (700 aa).

The tr-type G domain occupies 10–286 (NKVRNIGIMA…AVIDYLPNPL (277 aa)). Residues 19 to 26 (AHIDAGKT), 83 to 87 (DTPGH), and 137 to 140 (NKMD) each bind GTP.

This sequence belongs to the TRAFAC class translation factor GTPase superfamily. Classic translation factor GTPase family. EF-G/EF-2 subfamily.

The protein resides in the cytoplasm. Its function is as follows. Catalyzes the GTP-dependent ribosomal translocation step during translation elongation. During this step, the ribosome changes from the pre-translocational (PRE) to the post-translocational (POST) state as the newly formed A-site-bound peptidyl-tRNA and P-site-bound deacylated tRNA move to the P and E sites, respectively. Catalyzes the coordinated movement of the two tRNA molecules, the mRNA and conformational changes in the ribosome. The polypeptide is Elongation factor G (Rhodococcus erythropolis (strain PR4 / NBRC 100887)).